The chain runs to 377 residues: Protein-tyrosine sulfotransferase 2 (377 aa).

Residues 1-8 (MRLSVRRV) lie on the Cytoplasmic side of the membrane. The chain crosses the membrane as a helical; Signal-anchor for type II membrane protein span at residues 9–25 (LLAAGCALVLVLAVQLG). Residues 26–377 (QQVLECRAVL…NSTSSHLGSS (352 aa)) lie on the Lumenal side of the membrane. 78–82 (RSGTT) is a binding site for 3'-phosphoadenylyl sulfate. An intrachain disulfide couples Cys96 to Cys156. Residue Glu99 is the Proton donor/acceptor of the active site. Positions 101–105 (RIIPR) are interaction with peptide substrate. 3'-phosphoadenylyl sulfate is bound by residues Arg183, Ser191, and Arg195. An intrachain disulfide couples Cys225 to Cys233. 3'-phosphoadenylyl sulfate is bound by residues Tyr238, 285–294 (STDQVIKPVN), and Lys300. 2 N-linked (GlcNAc...) asparagine glycosylation sites follow: Asn343 and Asn368.

The protein belongs to the protein sulfotransferase family. Homodimer. Can also form heterodimers with TPST1. Post-translationally, N-glycosylated. In terms of tissue distribution, widely expressed.

Its subcellular location is the golgi apparatus membrane. The catalysed reaction is L-tyrosyl-[protein] + 3'-phosphoadenylyl sulfate = O-sulfo-L-tyrosine-[protein] + adenosine 3',5'-bisphosphate + H(+). In terms of biological role, catalyzes the O-sulfation of tyrosine residues within acidic motifs of polypeptides, using 3'-phosphoadenylyl sulfate (PAPS) as cosubstrate. The chain is Protein-tyrosine sulfotransferase 2 (TPST2) from Homo sapiens (Human).